The chain runs to 1053 residues: Carbamoyl phosphate synthase large chain (1053 aa).

The tract at residues 1–397 (MPKRTDIKKV…SFMKAKRSID (397 aa)) is carboxyphosphate synthetic domain. Residues R127, R167, G173, G174, E206, V208, E213, G239, I240, H241, Q282, and E294 each coordinate ATP. The ATP-grasp 1 domain occupies 131 to 323 (RDLMNEIGEP…IARVAAKIAI (193 aa)). Residues Q282, E294, and N296 each contribute to the Mg(2+) site. Mn(2+) is bound by residues Q282, E294, and N296. An oligomerization domain region spans residues 398–530 (TDVRTHTSPS…YSTREGTSEI (133 aa)). The tract at residues 531-919 (VRDKKQKILI…YKACISADNE (389 aa)) is carbamoyl phosphate synthetic domain. Residues 661–852 (SVLLTTLQIP…IAKIAAKVMI (192 aa)) enclose the ATP-grasp 2 domain. ATP-binding residues include R697, S736, L738, E743, G768, I769, H770, S771, Q811, and E823. The Mg(2+) site is built by Q811, E823, and N825. Positions 811, 823, and 825 each coordinate Mn(2+). Positions 918-1053 (NELPLKGNVF…TLEPLSHYLR (136 aa)) constitute an MGS-like domain. Residues 920–1053 (LPLKGNVFVS…TLEPLSHYLR (134 aa)) form an allosteric domain region.

It belongs to the CarB family. As to quaternary structure, composed of two chains; the small (or glutamine) chain promotes the hydrolysis of glutamine to ammonia, which is used by the large (or ammonia) chain to synthesize carbamoyl phosphate. Tetramer of heterodimers (alpha,beta)4. It depends on Mg(2+) as a cofactor. Mn(2+) serves as cofactor.

It catalyses the reaction hydrogencarbonate + L-glutamine + 2 ATP + H2O = carbamoyl phosphate + L-glutamate + 2 ADP + phosphate + 2 H(+). It carries out the reaction hydrogencarbonate + NH4(+) + 2 ATP = carbamoyl phosphate + 2 ADP + phosphate + 2 H(+). It functions in the pathway amino-acid biosynthesis; L-arginine biosynthesis; carbamoyl phosphate from bicarbonate: step 1/1. It participates in pyrimidine metabolism; UMP biosynthesis via de novo pathway; (S)-dihydroorotate from bicarbonate: step 1/3. Functionally, large subunit of the glutamine-dependent carbamoyl phosphate synthetase (CPSase). CPSase catalyzes the formation of carbamoyl phosphate from the ammonia moiety of glutamine, carbonate, and phosphate donated by ATP, constituting the first step of 2 biosynthetic pathways, one leading to arginine and/or urea and the other to pyrimidine nucleotides. The large subunit (synthetase) binds the substrates ammonia (free or transferred from glutamine from the small subunit), hydrogencarbonate and ATP and carries out an ATP-coupled ligase reaction, activating hydrogencarbonate by forming carboxy phosphate which reacts with ammonia to form carbamoyl phosphate. The chain is Carbamoyl phosphate synthase large chain from Methanoregula boonei (strain DSM 21154 / JCM 14090 / 6A8).